The following is a 798-amino-acid chain: Protocadherin beta-13 (798 aa).

The N-terminal stretch at 1–28 (MEASGKLICRQRQVLFSFLLLGLSLAGA) is a signal peptide. The Extracellular segment spans residues 29-690 (AEPRSYSVVE…AQADSLTVYL (662 aa)). 5 Cadherin domains span residues 36-134 (VVEE…SPVF), 139-243 (MLVK…APEF), 248-348 (YRVQ…APEV), 353-451 (FTSP…APAF), and 456-561 (YTLF…SPFV). N418 and N436 each carry an N-linked (GlcNAc...) asparagine glycan. N-linked (GlcNAc...) asparagine glycosylation occurs at N567. In terms of domain architecture, Cadherin 6 spans 568–671 (GSAPCTELVP…LVDGFSQPYL (104 aa)). A helical membrane pass occupies residues 691-711 (VVALASVSSLFLFSVLLFVAV). The Cytoplasmic segment spans residues 712-798 (RLCRRSRAAS…FPNNFGFNIQ (87 aa)).

It is found in the cell membrane. In terms of biological role, potential calcium-dependent cell-adhesion protein. May be involved in the establishment and maintenance of specific neuronal connections in the brain. The protein is Protocadherin beta-13 (PCDHB13) of Pan troglodytes (Chimpanzee).